The sequence spans 586 residues: Phosphoenolpyruvate-protein phosphotransferase (586 aa).

The active-site Tele-phosphohistidine intermediate is His201. Residues Arg308 and Arg345 each contribute to the phosphoenolpyruvate site. Mg(2+) is bound by residues Glu446 and Asp470. Residues 469–470 and Arg480 contribute to the phosphoenolpyruvate site; that span reads ND. Cys517 acts as the Proton donor in catalysis.

This sequence belongs to the PEP-utilizing enzyme family. In terms of assembly, homodimer. It depends on Mg(2+) as a cofactor.

The protein resides in the cytoplasm. The catalysed reaction is L-histidyl-[protein] + phosphoenolpyruvate = N(pros)-phospho-L-histidyl-[protein] + pyruvate. In terms of biological role, general (non sugar-specific) component of the phosphoenolpyruvate-dependent sugar phosphotransferase system (sugar PTS). This major carbohydrate active-transport system catalyzes the phosphorylation of incoming sugar substrates concomitantly with their translocation across the cell membrane. Enzyme I transfers the phosphoryl group from phosphoenolpyruvate (PEP) to the phosphoryl carrier protein (HPr). This is Phosphoenolpyruvate-protein phosphotransferase from Cupriavidus necator (strain ATCC 17699 / DSM 428 / KCTC 22496 / NCIMB 10442 / H16 / Stanier 337) (Ralstonia eutropha).